The primary structure comprises 304 residues: Dermonecrotic toxin LlSicTox-betaIA1 (304 aa).

The first 21 residues, 1-21, serve as a signal peptide directing secretion; that stretch reads MLLSAVISFIGFAAFLQEANG. Positions 22–26 are excised as a propeptide; sequence HVVER. His-38 is an active-site residue. Glu-58 and Asp-60 together coordinate Mg(2+). The active-site Nucleophile is His-74. Disulfide bonds link Cys-78–Cys-84 and Cys-80–Cys-223. Asp-118 is a binding site for Mg(2+).

The protein belongs to the arthropod phospholipase D family. Class II subfamily. Class IIb sub-subfamily. Mg(2+) serves as cofactor. Expressed by the venom gland.

It is found in the secreted. It carries out the reaction an N-(acyl)-sphingosylphosphocholine = an N-(acyl)-sphingosyl-1,3-cyclic phosphate + choline. The catalysed reaction is an N-(acyl)-sphingosylphosphoethanolamine = an N-(acyl)-sphingosyl-1,3-cyclic phosphate + ethanolamine. The enzyme catalyses a 1-acyl-sn-glycero-3-phosphocholine = a 1-acyl-sn-glycero-2,3-cyclic phosphate + choline. It catalyses the reaction a 1-acyl-sn-glycero-3-phosphoethanolamine = a 1-acyl-sn-glycero-2,3-cyclic phosphate + ethanolamine. Dermonecrotic toxins cleave the phosphodiester linkage between the phosphate and headgroup of certain phospholipids (sphingolipid and lysolipid substrates), forming an alcohol (often choline) and a cyclic phosphate. This toxin acts on sphingomyelin (SM) with low activity. It may also act on ceramide phosphoethanolamine (CPE), lysophosphatidylcholine (LPC) and lysophosphatidylethanolamine (LPE), but not on lysophosphatidylserine (LPS), and lysophosphatidylglycerol (LPG). It acts by transphosphatidylation, releasing exclusively cyclic phosphate products as second products. Induces hemolysis, dermonecrosis, and edema. Also induces platelet aggregation. The protein is Dermonecrotic toxin LlSicTox-betaIA1 of Loxosceles laeta (South American recluse spider).